The sequence spans 422 residues: Keratan-sulfate endo-1,4-beta-galactosidase (422 aa).

An N-terminal signal peptide occupies residues 1-46; it reads MRKTKFWLVLSLIATSLSIFACKKDSTATKNPIPEVSKAKASTKLL. The GH16 domain maps to 47–292; that stretch reads NATTVATTDY…YVRVYKLPLF (246 aa). Catalysis depends on E171, which acts as the Nucleophile. E176 serves as the catalytic Proton donor. The 116-residue stretch at 291-406 folds into the CBM-cenC domain; that stretch reads LFSNGDFESG…NTTATVYFYK (116 aa).

Belongs to the glycosyl hydrolase 16 family.

The protein localises to the secreted. It carries out the reaction Endohydrolysis of (1-&gt;4)-beta-D-galactosidic linkages in keratan sulfate.. Functionally, hydrolyzes internal endo-beta-galactosyl linkages in keratan sulfate and in various neolacto-type glycosphingolipids, producing sulfated and non-sulfated disaccharides, and glucosylceramides respectivly. The protein is Keratan-sulfate endo-1,4-beta-galactosidase of Sphingobacterium multivorum.